The sequence spans 108 residues: UPF0060 membrane protein Sputw3181_1172 (108 aa).

4 consecutive transmembrane segments (helical) span residues 3–23, 31–51, 63–83, and 87–107; these read VITT…GCYL, GASA…AWLL, AAYG…VDGI, and RWDL…MFAP.

Belongs to the UPF0060 family.

Its subcellular location is the cell inner membrane. In Shewanella sp. (strain W3-18-1), this protein is UPF0060 membrane protein Sputw3181_1172.